The sequence spans 98 residues: NADH-ubiquinone oxidoreductase chain 4L (98 aa).

A run of 3 helical transmembrane segments spans residues 1 to 21 (MSLT…GLLM), 29 to 49 (SLLC…MTIL), and 61 to 81 (IILL…LVMV).

It belongs to the complex I subunit 4L family. In terms of assembly, core subunit of respiratory chain NADH dehydrogenase (Complex I) which is composed of 45 different subunits.

The protein resides in the mitochondrion inner membrane. The catalysed reaction is a ubiquinone + NADH + 5 H(+)(in) = a ubiquinol + NAD(+) + 4 H(+)(out). In terms of biological role, core subunit of the mitochondrial membrane respiratory chain NADH dehydrogenase (Complex I) which catalyzes electron transfer from NADH through the respiratory chain, using ubiquinone as an electron acceptor. Part of the enzyme membrane arm which is embedded in the lipid bilayer and involved in proton translocation. This is NADH-ubiquinone oxidoreductase chain 4L (MT-ND4L) from Chiroderma trinitatum (Little big-eyed bat).